The primary structure comprises 279 residues: Pantothenate synthetase (279 aa).

M26–H33 serves as a coordination point for ATP. The active-site Proton donor is H33. Residue Q57 coordinates (R)-pantoate. Beta-alanine is bound at residue Q57. An ATP-binding site is contributed by G144–D147. Q150 provides a ligand contact to (R)-pantoate. ATP contacts are provided by residues V173 and L181 to R184.

This sequence belongs to the pantothenate synthetase family. Homodimer.

It is found in the cytoplasm. The catalysed reaction is (R)-pantoate + beta-alanine + ATP = (R)-pantothenate + AMP + diphosphate + H(+). It participates in cofactor biosynthesis; (R)-pantothenate biosynthesis; (R)-pantothenate from (R)-pantoate and beta-alanine: step 1/1. In terms of biological role, catalyzes the condensation of pantoate with beta-alanine in an ATP-dependent reaction via a pantoyl-adenylate intermediate. The protein is Pantothenate synthetase of Burkholderia ambifaria (strain ATCC BAA-244 / DSM 16087 / CCUG 44356 / LMG 19182 / AMMD) (Burkholderia cepacia (strain AMMD)).